The chain runs to 677 residues: NADPH--cytochrome P450 reductase (677 aa).

Position 2 is an N-acetylglycine (Gly2). The Lumenal portion of the chain corresponds to 2–21; it reads GDSHVDTSSTVSEAVAEEVS. A helical membrane pass occupies residues 22 to 42; that stretch reads LFSMTDMILFSLIVGLLTYWF. Residues 43-677 are Cytoplasmic-facing; it reads LFRKKKEEVP…KGRYSLDVWS (635 aa). Ser63 bears the Phosphoserine mark. The Flavodoxin-like domain maps to 80–224; sequence IIVFYGSQTG…DFITWREQFW (145 aa). Residues 86–91, 138–141, 173–182, and Asp208 each bind FMN; these read SQTGTA, ATYG, and LGNKTYEHFN. The FAD-binding FR-type domain occupies 279-521; it reads KNPFLAAVTT…FVRKSQFRLP (243 aa). An NADP(+)-binding site is contributed by Arg298. FAD is bound by residues Arg424, 454–457, 472–474, Tyr478, and 488–491; these read RYYS, CAV, and GVAT. Residues Thr535, 596 to 597, 602 to 606, and Asp638 each bind NADP(+); these read SR and KVYVQ. Trp676 lines the FAD pocket.

Belongs to the NADPH--cytochrome P450 reductase family. The protein in the N-terminal section; belongs to the flavodoxin family. It in the C-terminal section; belongs to the flavoprotein pyridine nucleotide cytochrome reductase family. It depends on FAD as a cofactor. FMN is required as a cofactor.

It is found in the endoplasmic reticulum membrane. The enzyme catalyses 2 oxidized [cytochrome P450] + NADPH = 2 reduced [cytochrome P450] + NADP(+) + H(+). In terms of biological role, this enzyme is required for electron transfer from NADP to cytochrome P450 in microsomes. It can also provide electron transfer to heme oxygenase and cytochrome B5. The sequence is that of NADPH--cytochrome P450 reductase from Homo sapiens (Human).